We begin with the raw amino-acid sequence, 180 residues long: Protein Flattop (180 aa).

The interval 111 to 180 (PQISGKASGK…AGDKVLQAQS (70 aa)) is disordered.

This sequence belongs to the Flattop family.

Its subcellular location is the cytoplasm. The protein localises to the cytoskeleton. It localises to the cilium basal body. It is found in the cell projection. The protein resides in the cilium. Its subcellular location is the apical cell membrane. The protein localises to the cilium axoneme. Microtubule inner protein (MIP) part of the dynein-decorated doublet microtubules (DMTs) in cilia axoneme. Acts as a regulator of cilium basal body docking and positioning in mono- and multiciliated cells. Regulates basal body docking and cilia formation in multiciliated lung cells. Regulates kinocilium positioning and stereocilia bundle morphogenesis in the inner ear. The chain is Protein Flattop from Xenopus laevis (African clawed frog).